We begin with the raw amino-acid sequence, 419 residues long: Histidine--tRNA ligase (419 aa).

This sequence belongs to the class-II aminoacyl-tRNA synthetase family. As to quaternary structure, homodimer.

The protein localises to the cytoplasm. The enzyme catalyses tRNA(His) + L-histidine + ATP = L-histidyl-tRNA(His) + AMP + diphosphate + H(+). This is Histidine--tRNA ligase from Syntrophotalea carbinolica (strain DSM 2380 / NBRC 103641 / GraBd1) (Pelobacter carbinolicus).